A 475-amino-acid polypeptide reads, in one-letter code: Bifunctional protein HldE (475 aa).

Residues 1-318 (MMQYSPKFNN…ENAIHHREET (318 aa)) form a ribokinase region. 195 to 198 (NMSE) serves as a coordination point for ATP. The active site involves Asp-264. A cytidylyltransferase region spans residues 344-475 (MTNGCFDILH…NVIKKIQASK (132 aa)).

This sequence in the N-terminal section; belongs to the carbohydrate kinase PfkB family. The protein in the C-terminal section; belongs to the cytidylyltransferase family. In terms of assembly, homodimer.

The catalysed reaction is D-glycero-beta-D-manno-heptose 7-phosphate + ATP = D-glycero-beta-D-manno-heptose 1,7-bisphosphate + ADP + H(+). The enzyme catalyses D-glycero-beta-D-manno-heptose 1-phosphate + ATP + H(+) = ADP-D-glycero-beta-D-manno-heptose + diphosphate. Its pathway is nucleotide-sugar biosynthesis; ADP-L-glycero-beta-D-manno-heptose biosynthesis; ADP-L-glycero-beta-D-manno-heptose from D-glycero-beta-D-manno-heptose 7-phosphate: step 1/4. The protein operates within nucleotide-sugar biosynthesis; ADP-L-glycero-beta-D-manno-heptose biosynthesis; ADP-L-glycero-beta-D-manno-heptose from D-glycero-beta-D-manno-heptose 7-phosphate: step 3/4. In terms of biological role, catalyzes the phosphorylation of D-glycero-D-manno-heptose 7-phosphate at the C-1 position to selectively form D-glycero-beta-D-manno-heptose-1,7-bisphosphate. Catalyzes the ADP transfer from ATP to D-glycero-beta-D-manno-heptose 1-phosphate, yielding ADP-D-glycero-beta-D-manno-heptose. This Actinobacillus pleuropneumoniae serotype 5b (strain L20) protein is Bifunctional protein HldE.